The primary structure comprises 203 residues: Nudix hydrolase 12, mitochondrial (203 aa).

The region spanning 18 to 166 is the Nudix hydrolase domain; sequence NFRLVSGCIP…WMQRALEEFL (149 aa). A Nudix box motif is present at residues 66 to 87; sequence GGWEDDETVLEAASREAIEEAG. Mg(2+)-binding residues include Glu81 and Glu85.

The protein belongs to the Nudix hydrolase family. Mg(2+) serves as cofactor. Requires Mn(2+) as cofactor. As to expression, expressed in roots, leaves, stems and inflorescences.

Its subcellular location is the mitochondrion. Its function is as follows. Probably mediates the hydrolysis of some nucleoside diphosphate derivatives. The sequence is that of Nudix hydrolase 12, mitochondrial (NUDT12) from Arabidopsis thaliana (Mouse-ear cress).